A 332-amino-acid chain; its full sequence is Ribosomal RNA small subunit methyltransferase C (332 aa).

Belongs to the methyltransferase superfamily. RsmC family. As to quaternary structure, monomer.

The protein localises to the cytoplasm. The catalysed reaction is guanosine(1207) in 16S rRNA + S-adenosyl-L-methionine = N(2)-methylguanosine(1207) in 16S rRNA + S-adenosyl-L-homocysteine + H(+). Its function is as follows. Specifically methylates the guanine in position 1207 of 16S rRNA in the 30S particle. This Pseudomonas fluorescens (strain ATCC BAA-477 / NRRL B-23932 / Pf-5) protein is Ribosomal RNA small subunit methyltransferase C.